Here is a 490-residue protein sequence, read N- to C-terminus: Cobyric acid synthase (490 aa).

A GATase cobBQ-type domain is found at 252 to 439 (RLKVVVPVLP…LHGLFESTAA (188 aa)). Cys333 functions as the Nucleophile in the catalytic mechanism. His431 is an active-site residue.

It belongs to the CobB/CobQ family. CobQ subfamily.

The protein operates within cofactor biosynthesis; adenosylcobalamin biosynthesis. Functionally, catalyzes amidations at positions B, D, E, and G on adenosylcobyrinic A,C-diamide. NH(2) groups are provided by glutamine, and one molecule of ATP is hydrogenolyzed for each amidation. This Pseudomonas paraeruginosa (strain DSM 24068 / PA7) (Pseudomonas aeruginosa (strain PA7)) protein is Cobyric acid synthase.